The primary structure comprises 232 residues: Triosephosphate isomerase (232 aa).

A substrate-binding site is contributed by 6-8 (NLK). The active-site Electrophile is His-91. Glu-158 acts as the Proton acceptor in catalysis. Substrate contacts are provided by Gly-164 and Ser-194.

This sequence belongs to the triosephosphate isomerase family. Homodimer.

It is found in the cytoplasm. The catalysed reaction is D-glyceraldehyde 3-phosphate = dihydroxyacetone phosphate. It functions in the pathway carbohydrate biosynthesis; gluconeogenesis. The protein operates within carbohydrate degradation; glycolysis; D-glyceraldehyde 3-phosphate from glycerone phosphate: step 1/1. In terms of biological role, involved in the gluconeogenesis. Catalyzes stereospecifically the conversion of dihydroxyacetone phosphate (DHAP) to D-glyceraldehyde-3-phosphate (G3P). The sequence is that of Triosephosphate isomerase from Campylobacter hominis (strain ATCC BAA-381 / DSM 21671 / CCUG 45161 / LMG 19568 / NCTC 13146 / CH001A).